We begin with the raw amino-acid sequence, 280 residues long: Energy-coupling factor transporter ATP-binding protein EcfA1 (280 aa).

Residues 6–241 (LRTENISFQY…SHMLQEIGLD (236 aa)) form the ABC transporter domain. 40–47 (GQNGSGKS) contacts ATP.

This sequence belongs to the ABC transporter superfamily. Energy-coupling factor EcfA family. As to quaternary structure, forms a stable energy-coupling factor (ECF) transporter complex composed of 2 membrane-embedded substrate-binding proteins (S component), 2 ATP-binding proteins (A component) and 2 transmembrane proteins (T component).

It localises to the cell membrane. Its function is as follows. ATP-binding (A) component of a common energy-coupling factor (ECF) ABC-transporter complex. Unlike classic ABC transporters this ECF transporter provides the energy necessary to transport a number of different substrates. The protein is Energy-coupling factor transporter ATP-binding protein EcfA1 of Bacillus thuringiensis subsp. konkukian (strain 97-27).